A 399-amino-acid chain; its full sequence is uncharacterized protein (399 aa).

Positions Ala-375–Arg-399 are disordered.

This sequence belongs to the mycobacterial PPE family.

This is an uncharacterized protein from Mycobacterium tuberculosis (strain ATCC 25618 / H37Rv).